The following is a 330-amino-acid chain: Glycerol-3-phosphate dehydrogenase [NAD(P)+] (330 aa).

Positions 11, 12, 32, and 106 each coordinate NADPH. Residues K106, G133, and S135 each coordinate sn-glycerol 3-phosphate. A137 contributes to the NADPH binding site. The sn-glycerol 3-phosphate site is built by K188, D241, S251, R252, and N253. K188 (proton acceptor) is an active-site residue. Residue R252 participates in NADPH binding. Residues V276 and E278 each coordinate NADPH.

The protein belongs to the NAD-dependent glycerol-3-phosphate dehydrogenase family.

The protein resides in the cytoplasm. It carries out the reaction sn-glycerol 3-phosphate + NAD(+) = dihydroxyacetone phosphate + NADH + H(+). It catalyses the reaction sn-glycerol 3-phosphate + NADP(+) = dihydroxyacetone phosphate + NADPH + H(+). The protein operates within membrane lipid metabolism; glycerophospholipid metabolism. Functionally, catalyzes the reduction of the glycolytic intermediate dihydroxyacetone phosphate (DHAP) to sn-glycerol 3-phosphate (G3P), the key precursor for phospholipid synthesis. The polypeptide is Glycerol-3-phosphate dehydrogenase [NAD(P)+] (Clostridium botulinum (strain Alaska E43 / Type E3)).